A 256-amino-acid polypeptide reads, in one-letter code: Imidazole glycerol phosphate synthase subunit HisF (256 aa).

Catalysis depends on residues aspartate 12 and aspartate 131.

The protein belongs to the HisA/HisF family. In terms of assembly, heterodimer of HisH and HisF.

The protein localises to the cytoplasm. The catalysed reaction is 5-[(5-phospho-1-deoxy-D-ribulos-1-ylimino)methylamino]-1-(5-phospho-beta-D-ribosyl)imidazole-4-carboxamide + L-glutamine = D-erythro-1-(imidazol-4-yl)glycerol 3-phosphate + 5-amino-1-(5-phospho-beta-D-ribosyl)imidazole-4-carboxamide + L-glutamate + H(+). It functions in the pathway amino-acid biosynthesis; L-histidine biosynthesis; L-histidine from 5-phospho-alpha-D-ribose 1-diphosphate: step 5/9. In terms of biological role, IGPS catalyzes the conversion of PRFAR and glutamine to IGP, AICAR and glutamate. The HisF subunit catalyzes the cyclization activity that produces IGP and AICAR from PRFAR using the ammonia provided by the HisH subunit. The chain is Imidazole glycerol phosphate synthase subunit HisF from Pseudomonas fluorescens (strain Pf0-1).